A 269-amino-acid chain; its full sequence is Bidirectional sugar transporter SWEET1a (269 aa).

The Extracellular portion of the chain corresponds to 1 to 6 (MEHIAR). A helical membrane pass occupies residues 7–27 (FFFGVSGNVIALFLFLSPVVT). The MtN3/slv 1 domain maps to 8–96 (FFGVSGNVIA…IFLIFAVDRR (89 aa)). The Cytoplasmic portion of the chain corresponds to 28-42 (FWRIIRKRSTEDFSG). The helical transmembrane segment at 43 to 63 (VPYNMTLLNCLLSAWYGLPFV) threads the bilayer. Residues 64–72 (SPNNILVST) lie on the Extracellular side of the membrane. Residues 73–93 (INGTGSVIEAIYVVIFLIFAV) form a helical membrane-spanning segment. Residues 94–100 (DRRARLR) lie on the Cytoplasmic side of the membrane. The helical transmembrane segment at 101-121 (MLGLLSIVVSIFATVVLVSLL) threads the bilayer. At 122–129 (ALHGNARK) the chain is on the extracellular side. A helical transmembrane segment spans residues 130 to 150 (VFCGLAATIFSICMYASPLSI). The 84-residue stretch at 132-215 (CGLAATIFSI…ILYFIYRKNK (84 aa)) folds into the MtN3/slv 2 domain. Residues 151-164 (MRLVIKTKSVEYMP) are Cytoplasmic-facing. A helical membrane pass occupies residues 165-185 (FLLSLAVFLCGTSWFIYGLLG). At 186-189 (RDPF) the chain is on the extracellular side. Residues 190–210 (IIIPNGCGSFLGLVQLILYFI) traverse the membrane as a helical segment. Residues 211 to 269 (YRKNKGPAVPAGKGEAAAAADVEDAKKVAAAVEMADATTTNKAAADTVVGDGKVVASQV) are Cytoplasmic-facing.

It belongs to the SWEET sugar transporter family. As to quaternary structure, forms homooligomers and/or heterooligomers.

It localises to the cell membrane. Functionally, mediates both low-affinity uptake and efflux of sugar across the plasma membrane. In Sorghum bicolor (Sorghum), this protein is Bidirectional sugar transporter SWEET1a.